The chain runs to 145 residues: Ribonuclease H (145 aa).

Positions 1–141 (MQEVIIYSDG…ADALANRGVA (141 aa)) constitute an RNase H type-1 domain. Asp9, Glu47, Asp69, and Asp133 together coordinate Mg(2+).

It belongs to the RNase H family. As to quaternary structure, monomer. Mg(2+) serves as cofactor.

It is found in the cytoplasm. The enzyme catalyses Endonucleolytic cleavage to 5'-phosphomonoester.. Endonuclease that specifically degrades the RNA of RNA-DNA hybrids. This is Ribonuclease H from Cupriavidus pinatubonensis (strain JMP 134 / LMG 1197) (Cupriavidus necator (strain JMP 134)).